The sequence spans 368 residues: Phosphotransferase IIC component GlvC (368 aa).

The Periplasmic portion of the chain corresponds to Met1–Ala11. Residues Met1–Asp368 form the PTS EIIC type-1 domain. A helical transmembrane segment spans residues Met12–Leu32. At Gln33 to Gly59 the chain is on the cytoplasmic side. The helical transmembrane segment at Gly60–Ala80 threads the bilayer. At Lys81 to Arg86 the chain is on the periplasmic side. The helical transmembrane segment at Ala87–Met107 threads the bilayer. Residues Thr108 to Met129 lie on the Cytoplasmic side of the membrane. The helical transmembrane segment at Met130 to Val150 threads the bilayer. Over Thr151–Ser173 the chain is Periplasmic. The chain crosses the membrane as a helical span at residues Tyr174 to Trp194. The Cytoplasmic portion of the chain corresponds to Pro195 to Gln198. The helical transmembrane segment at Met199–Phe221 threads the bilayer. Over Leu222–Arg224 the chain is Periplasmic. A helical transmembrane segment spans residues Ile225–Ala245. Topologically, residues Val246 to Gly276 are cytoplasmic. A helical membrane pass occupies residues Phe277 to Phe297. The Periplasmic portion of the chain corresponds to Thr298–Lys306. Residues Val307–Leu327 traverse the membrane as a helical segment. A topological domain (cytoplasmic) is located at residue Glu328. Residues Phe329 to Met349 traverse the membrane as a helical segment. Residues Ser350–Asp368 are Periplasmic-facing.

It is found in the cell inner membrane. Its function is as follows. The phosphoenolpyruvate-dependent sugar phosphotransferase system (PTS), a major carbohydrate active -transport system, catalyzes the phosphorylation of incoming sugar substrates concomitant with their translocation across the cell membrane. This operon may be cryptic in wild-type K12 strains. This is Phosphotransferase IIC component GlvC from Escherichia coli (strain K12).